The chain runs to 134 residues: Small ribosomal subunit protein uS8c (134 aa).

The protein belongs to the universal ribosomal protein uS8 family. In terms of assembly, part of the 30S ribosomal subunit.

It is found in the plastid. It localises to the chloroplast. Its function is as follows. One of the primary rRNA binding proteins, it binds directly to 16S rRNA central domain where it helps coordinate assembly of the platform of the 30S subunit. The sequence is that of Small ribosomal subunit protein uS8c (rps8) from Phaseolus angularis (Azuki bean).